Consider the following 706-residue polypeptide: Termination factor NPH-I homolog (706 aa).

Residues 62–227 enclose the Helicase ATP-binding domain; the sequence is IGQGENTRGL…VPCFNMLSGR (166 aa). 75–82 contacts ATP; sequence HQMGMGKT. The short motif at 168-171 is the DEAH box element; that stretch reads DEAH. Residues 378 to 599 enclose the Helicase C-terminal domain; that stretch reads KIVCMLKNIK…HLNSAFRDLL (222 aa).

It belongs to the DEAD box helicase family. DEAH subfamily. Part of the viral DNA-directed RNA polymerase that consists of 8 polII-like subunits (RPB1, RPB2, RPB3, RPB5, RPB6, RPB7, RPB9, RPB10), a capping enzyme and a termination factor.

The protein resides in the virion. Functionally, putative DNA-dependent ATPase required for providing the needed energy to achieve the termination of early transcripts. This is Termination factor NPH-I homolog from African swine fever virus (isolate Pig/Kenya/KEN-50/1950) (ASFV).